Consider the following 350-residue polypeptide: Sterol-4-alpha-carboxylate 3-dehydrogenase ERG26, decarboxylating (350 aa).

NADP(+) is bound by residues 12–18 (GGSGFLG), 63–64 (DL), and 85–87 (SAS). Substrate-binding residues include Ser-125 and Tyr-152. Residues Tyr-152, Lys-156, and 179–182 (PAGI) each bind NADP(+). Lys-156 functions as the Proton donor in the catalytic mechanism.

It belongs to the 3-beta-HSD family. In terms of assembly, heterotetramer of ERG25, ERG26, ERG27 and ERG28. ERG28 acts as a scaffold to tether ERG27 and other 4,4-demethylation-related enzymes, forming a demethylation enzyme complex, in the endoplasmic reticulum.

The protein resides in the endoplasmic reticulum membrane. The enzyme catalyses 4beta-methylzymosterol-4alpha-carboxylate + NADP(+) = 3-dehydro-4-methylzymosterol + CO2 + NADPH. Its pathway is steroid biosynthesis; zymosterol biosynthesis; zymosterol from lanosterol: step 4/6. Its function is as follows. Sterol-4-alpha-carboxylate 3-dehydrogenase; part of the third module of ergosterol biosynthesis pathway that includes the late steps of the pathway. ERG26 is a catalytic component of the C-4 demethylation complex that catalyzes the oxidative decarboxylation that results in a reduction of the 3-beta-hydroxy group at the C-3 carbon to an oxo group. The third module or late pathway involves the ergosterol synthesis itself through consecutive reactions that mainly occur in the endoplasmic reticulum (ER) membrane. Firstly, the squalene synthase ERG9 catalyzes the condensation of 2 farnesyl pyrophosphate moieties to form squalene, which is the precursor of all steroids. Squalene synthase is crucial for balancing the incorporation of farnesyl diphosphate (FPP) into sterol and nonsterol isoprene synthesis. Secondly, the squalene epoxidase ERG1 catalyzes the stereospecific oxidation of squalene to (S)-2,3-epoxysqualene, which is considered to be a rate-limiting enzyme in steroid biosynthesis. Then, the lanosterol synthase ERG7 catalyzes the cyclization of (S)-2,3 oxidosqualene to lanosterol, a reaction that forms the sterol core. In the next steps, lanosterol is transformed to zymosterol through a complex process involving various demethylation, reduction and desaturation reactions. The lanosterol 14-alpha-demethylase ERG11 (also known as CYP51) catalyzes C14-demethylation of lanosterol to produce 4,4'-dimethyl cholesta-8,14,24-triene-3-beta-ol, which is critical for ergosterol biosynthesis. The C-14 reductase ERG24 reduces the C14=C15 double bond of 4,4-dimethyl-cholesta-8,14,24-trienol to produce 4,4-dimethyl-cholesta-8,24-dienol. 4,4-dimethyl-cholesta-8,24-dienol is substrate of the C-4 demethylation complex ERG25-ERG26-ERG27 in which ERG25 catalyzes the three-step monooxygenation required for the demethylation of 4,4-dimethyl and 4alpha-methylsterols, ERG26 catalyzes the oxidative decarboxylation that results in a reduction of the 3-beta-hydroxy group at the C-3 carbon to an oxo group, and ERG27 is responsible for the reduction of the keto group on the C-3. ERG28 has a role as a scaffold to help anchor ERG25, ERG26 and ERG27 to the endoplasmic reticulum and ERG29 regulates the activity of the iron-containing C4-methylsterol oxidase ERG25. Then, the sterol 24-C-methyltransferase ERG6 catalyzes the methyl transfer from S-adenosyl-methionine to the C-24 of zymosterol to form fecosterol. The C-8 sterol isomerase ERG2 catalyzes the reaction which results in unsaturation at C-7 in the B ring of sterols and thus converts fecosterol to episterol. The sterol-C5-desaturase ERG3 then catalyzes the introduction of a C-5 double bond in the B ring to produce 5-dehydroepisterol. The C-22 sterol desaturase ERG5 further converts 5-dehydroepisterol into ergosta-5,7,22,24(28)-tetraen-3beta-ol by forming the C-22(23) double bond in the sterol side chain. Finally, ergosta-5,7,22,24(28)-tetraen-3beta-ol is substrate of the C-24(28) sterol reductase ERG4 to produce ergosterol. The protein is Sterol-4-alpha-carboxylate 3-dehydrogenase ERG26, decarboxylating of Candida albicans (strain SC5314 / ATCC MYA-2876) (Yeast).